The sequence spans 104 residues: DNA-directed RNA polymerase subunit Rpo13 (104 aa).

Disordered regions lie at residues Met-1–Phe-33 and Arg-78–Gly-104. Positions Thr-7–Asp-31 are enriched in acidic residues. Residues Ser-80–Gly-104 show a composition bias toward basic residues.

This sequence belongs to the archaeal Rpo13 RNA polymerase subunit family. In terms of assembly, part of the 13-subunit RNA polymerase complex.

The protein localises to the cytoplasm. It carries out the reaction RNA(n) + a ribonucleoside 5'-triphosphate = RNA(n+1) + diphosphate. Its function is as follows. DNA-dependent RNA polymerase (RNAP) catalyzes the transcription of DNA into RNA using the four ribonucleoside triphosphates as substrates. Probably binds dsDNA. The sequence is that of DNA-directed RNA polymerase subunit Rpo13 from Saccharolobus solfataricus (strain ATCC 35092 / DSM 1617 / JCM 11322 / P2) (Sulfolobus solfataricus).